Reading from the N-terminus, the 587-residue chain is Ankyrin repeat and SOCS box protein 14 (587 aa).

ANK repeat units follow at residues 82 to 112, 117 to 146, 150 to 179, 183 to 212, 216 to 245, 248 to 277, 281 to 310, 313 to 342, 355 to 384, 385 to 414, and 416 to 449; these read IGWI…SLWE, NGET…NPNA, EGNS…DVNL, NERT…HPDP, YGFT…IFCL, DSSS…DANI, SGHL…LAAI, SGIS…DVNF, HRKS…LPNQ, DPVN…NVNY, and CRVN…DTER. An SOCS box domain is found at 521–576; the sequence is WSEIHFILTNPRSLKHLCRLKIRKCMGRLHLRCPVFMSFLPLPNRLKAYVLYKEYD.

Belongs to the ankyrin SOCS box (ASB) family. As to quaternary structure, interacts with MAPRE2; this interaction promotes MAPRE2 degradation.

Its pathway is protein modification; protein ubiquitination. In terms of biological role, may be a substrate-recognition component of a SCF-like ECS (Elongin-Cullin-SOCS-box protein) E3 ubiquitin-protein ligase complex which mediates the ubiquitination and subsequent proteasomal degradation of target proteins. Plays a role in the inhibition of cardiomyocyte nuclear proliferation by mediating the ubiquitination and degradation of MAPRE2. This Homo sapiens (Human) protein is Ankyrin repeat and SOCS box protein 14 (ASB14).